We begin with the raw amino-acid sequence, 393 residues long: Succinate--CoA ligase [ADP-forming] subunit beta (393 aa).

An ATP-grasp domain is found at 9–245; that stretch reads KMLFAQYGIP…PSQEDKCETY (237 aa). Residues lysine 46, 53–55, glutamate 99, isoleucine 102, and glutamate 107 each bind ATP; that span reads GRG. Mg(2+) is bound by residues asparagine 200 and aspartate 214. Substrate is bound by residues asparagine 265 and 322 to 324; that span reads GIV.

This sequence belongs to the succinate/malate CoA ligase beta subunit family. As to quaternary structure, heterotetramer of two alpha and two beta subunits. Mg(2+) serves as cofactor.

It carries out the reaction succinate + ATP + CoA = succinyl-CoA + ADP + phosphate. The enzyme catalyses GTP + succinate + CoA = succinyl-CoA + GDP + phosphate. Its pathway is carbohydrate metabolism; tricarboxylic acid cycle; succinate from succinyl-CoA (ligase route): step 1/1. In terms of biological role, succinyl-CoA synthetase functions in the citric acid cycle (TCA), coupling the hydrolysis of succinyl-CoA to the synthesis of either ATP or GTP and thus represents the only step of substrate-level phosphorylation in the TCA. The beta subunit provides nucleotide specificity of the enzyme and binds the substrate succinate, while the binding sites for coenzyme A and phosphate are found in the alpha subunit. This is Succinate--CoA ligase [ADP-forming] subunit beta from Baumannia cicadellinicola subsp. Homalodisca coagulata.